The sequence spans 204 residues: tRNA (pseudouridine(54)-N(1))-methyltransferase (204 aa).

S-adenosyl-L-methionine contacts are provided by Leu136 and Gly158.

It belongs to the methyltransferase superfamily. TrmY family. Homodimer.

Its subcellular location is the cytoplasm. The catalysed reaction is pseudouridine(54) in tRNA + S-adenosyl-L-methionine = N(1)-methylpseudouridine(54) in tRNA + S-adenosyl-L-homocysteine + H(+). Specifically catalyzes the N1-methylation of pseudouridine at position 54 (Psi54) in tRNAs. The polypeptide is tRNA (pseudouridine(54)-N(1))-methyltransferase (Pyrococcus abyssi (strain GE5 / Orsay)).